We begin with the raw amino-acid sequence, 705 residues long: Tyrosine decarboxylase (705 aa).

The segment covering arginine 22–proline 32 has biased composition (polar residues). The disordered stretch occupies residues arginine 22–glutamate 81. Positions serine 33–threonine 55 are enriched in low complexity. Lysine 380 bears the N6-(pyridoxal phosphate)lysine mark. Residues valine 554 to lysine 620 adopt a coiled-coil conformation. A compositionally biased stretch (polar residues) spans histidine 667–proline 678. A disordered region spans residues histidine 667–aspartate 687.

Belongs to the group II decarboxylase family. Requires pyridoxal 5'-phosphate as cofactor. In terms of tissue distribution, expressed in the gonadal sheath projections in between the oocytes, in head RIM motor neurons and RIC interneurons.

Its subcellular location is the cytoplasm. It is found in the cell projection. The protein localises to the axon. It localises to the perikaryon. It catalyses the reaction L-tyrosine + H(+) = tyramine + CO2. In terms of biological role, required for the decarboxylation of tyrosine to tyramine, a precursor of octopamine but probably also itself a neurotransmitter. Involved in the regulation of egg laying, which is inhibited by tyramine. Also involved in controlling locomotion and head movements. Due to its involvement in octopamine biosynthesis, also required for crtc-1-dependent regulation of AMPK-mediated longevity which requires octopamine signaling. This is Tyrosine decarboxylase from Caenorhabditis elegans.